A 149-amino-acid chain; its full sequence is D-aminoacyl-tRNA deacylase (149 aa).

A Gly-cisPro motif, important for rejection of L-amino acids motif is present at residues 137–138 (GP).

It belongs to the DTD family. Homodimer.

The protein localises to the cytoplasm. The enzyme catalyses glycyl-tRNA(Ala) + H2O = tRNA(Ala) + glycine + H(+). It carries out the reaction a D-aminoacyl-tRNA + H2O = a tRNA + a D-alpha-amino acid + H(+). Its function is as follows. An aminoacyl-tRNA editing enzyme that deacylates mischarged D-aminoacyl-tRNAs. Also deacylates mischarged glycyl-tRNA(Ala), protecting cells against glycine mischarging by AlaRS. Acts via tRNA-based rather than protein-based catalysis; rejects L-amino acids rather than detecting D-amino acids in the active site. By recycling D-aminoacyl-tRNA to D-amino acids and free tRNA molecules, this enzyme counteracts the toxicity associated with the formation of D-aminoacyl-tRNA entities in vivo and helps enforce protein L-homochirality. This is D-aminoacyl-tRNA deacylase from Desulfotalea psychrophila (strain LSv54 / DSM 12343).